We begin with the raw amino-acid sequence, 435 residues long: Homogentisate 1,2-dioxygenase (435 aa).

Catalysis depends on His-289, which acts as the Proton acceptor. Positions 332 and 338 each coordinate Fe cation. Residues Tyr-347 and His-368 each contribute to the homogentisate site. His-368 is a Fe cation binding site.

This sequence belongs to the homogentisate dioxygenase family. Hexamer; dimer of trimers. Requires Fe cation as cofactor.

It catalyses the reaction homogentisate + O2 = 4-maleylacetoacetate + H(+). The protein operates within amino-acid degradation; L-phenylalanine degradation; acetoacetate and fumarate from L-phenylalanine: step 4/6. Its function is as follows. Involved in the catabolism of homogentisate (2,5-dihydroxyphenylacetate or 2,5-OH-PhAc), a central intermediate in the degradation of phenylalanine and tyrosine. Catalyzes the oxidative ring cleavage of the aromatic ring of homogentisate to yield maleylacetoacetate. The polypeptide is Homogentisate 1,2-dioxygenase (Pseudomonas savastanoi pv. phaseolicola (strain 1448A / Race 6) (Pseudomonas syringae pv. phaseolicola (strain 1448A / Race 6))).